Here is a 245-residue protein sequence, read N- to C-terminus: 5'-nucleotidase SurE (245 aa).

Residues D8, D9, S39, and N91 each coordinate a divalent metal cation.

It belongs to the SurE nucleotidase family. The cofactor is a divalent metal cation.

Its subcellular location is the cytoplasm. The catalysed reaction is a ribonucleoside 5'-phosphate + H2O = a ribonucleoside + phosphate. Nucleotidase that shows phosphatase activity on nucleoside 5'-monophosphates. The polypeptide is 5'-nucleotidase SurE (Janthinobacterium sp. (strain Marseille) (Minibacterium massiliensis)).